Consider the following 380-residue polypeptide: Pregnancy-associated glycoprotein 4 (380 aa).

Residues 1 to 15 form the signal peptide; it reads MKWLVLLGLVAFSEC. Residues 16-53 constitute a propeptide, activation peptide; sequence IFKIPLRRVKTMRKTLSGKNMLNDVLKEHPYRLPQISF. In terms of domain architecture, Peptidase A1 spans 71-377; that stretch reads YVGNITIGTP…DRGNDRIGLA (307 aa). A glycan (N-linked (GlcNAc...) asparagine) is linked at Asn74. Asp89 is an active-site residue. Residues Cys102 and Cys107 are joined by a disulfide bond. A glycan (N-linked (GlcNAc...) asparagine) is linked at Asn125. An intrachain disulfide couples Cys261 to Cys265. Asp270 is a catalytic residue. Cys303 and Cys337 are oxidised to a cystine.

Belongs to the peptidase A1 family. In terms of tissue distribution, trophoblast and placental tissue. Produced specifically in the invasive binucleate cells of the placenta.

Its subcellular location is the secreted. It is found in the extracellular space. The polypeptide is Pregnancy-associated glycoprotein 4 (Ovis aries (Sheep)).